A 295-amino-acid polypeptide reads, in one-letter code: UDP-N-acetylenolpyruvoylglucosamine reductase (295 aa).

The region spanning 24-188 (KVGGNAEIFF…LKAVFKINKG (165 aa)) is the FAD-binding PCMH-type domain. Arg-168 is an active-site residue. Ser-217 acts as the Proton donor in catalysis. The active site involves Glu-287.

Belongs to the MurB family. FAD serves as cofactor.

It is found in the cytoplasm. It catalyses the reaction UDP-N-acetyl-alpha-D-muramate + NADP(+) = UDP-N-acetyl-3-O-(1-carboxyvinyl)-alpha-D-glucosamine + NADPH + H(+). The protein operates within cell wall biogenesis; peptidoglycan biosynthesis. Cell wall formation. This chain is UDP-N-acetylenolpyruvoylglucosamine reductase, found in Rickettsia massiliae (strain Mtu5).